The primary structure comprises 158 residues: C-type lectin galactose-binding isoform (158 aa).

A signal peptide spans 1 to 20 (MGRFLLVTLSLLVVAFSLNG). Cystine bridges form between C26-C37, C54-C154, and C129-C146. One can recognise a C-type lectin domain in the interval 33–155 (KNGYCYKVFK…CTALRPFLCQ (123 aa)). Ca(2+) is bound by residues Q119, D121, E127, N142, and D143. The short motif at 119–121 (QPD) is the Galactose-binding element.

This sequence belongs to the true venom lectin family. Homodimer; disulfide-linked. In terms of tissue distribution, expressed by the venom gland.

It localises to the secreted. Galactose-binding lectin that binds to and agglutinates erythrocytes in a calcium-dependent manner. The polypeptide is C-type lectin galactose-binding isoform (Hoplocephalus stephensii (Stephens's banded snake)).